Here is a 470-residue protein sequence, read N- to C-terminus: MNPNQKIICISATGMTLSVVSLLIGIANLGLNIGLHYKVGDTPDAPTPNVNGTNSTTTIINNNTQNNFTNITNIVQNKNEERTFLNLTKPLCEVNSWHILSKDNAIRIGEDAHILVTREPYLSCDPQGCRMFALSQGTTLRGRHANGTIHDRSPFRALISWEMGQAPSPYNVKIECIGWSSTSCHDGISRMSICMSGPNNNASAVVWYGGRPVTEIPSWAGNILRTQESECVCHKGICPVVMTDGPANNKAATKIIYFKEGKIQKIEELTGNAQHIEECSCYGAKEVIKCICRDNWKGANRPVITIDPEMMTHTSKYLCSKVLTDTSRPNDPTSGNCDAPVTGGSPDPGVKGFAFLDGENSWLGRTISKDSRSGYEMLKVPNAETSTQSGPIAHQVIVNNQNWSGYSGAFIDYWANKECFNPCFYVELIRGRPKESSVLWTSNSIVALCGSRERLGSWSWHDGAEIIYFK.

Over 1–6 (MNPNQK) the chain is Intravirion. The helical transmembrane segment at 7-27 (IICISATGMTLSVVSLLIGIA) threads the bilayer. Positions 11–33 (SATGMTLSVVSLLIGIANLGLNI) are involved in apical transport and lipid raft association. The Virion surface portion of the chain corresponds to 28 to 470 (NLGLNIGLHY…HDGAEIIYFK (443 aa)). A hypervariable stalk region region spans residues 36 to 88 (HYKVGDTPDAPTPNVNGTNSTTTIINNNTQNNFTNITNIVQNKNEERTFLNLT). N-linked (GlcNAc...) asparagine; by host glycans are attached at residues Asn-51, Asn-54, Asn-62, Asn-67, Asn-70, and Asn-86. The tract at residues 91 to 470 (LCEVNSWHIL…HDGAEIIYFK (380 aa)) is head of neuraminidase. Intrachain disulfides connect Cys-92/Cys-419, Cys-124/Cys-129, Cys-184/Cys-231, Cys-233/Cys-238, Cys-279/Cys-292, Cys-281/Cys-290, Cys-319/Cys-337, and Cys-423/Cys-449. Arg-118 provides a ligand contact to substrate. N-linked (GlcNAc...) asparagine; by host glycosylation is present at Asn-146. The Proton donor/acceptor role is filled by Asp-151. Substrate is bound at residue Arg-152. N-linked (GlcNAc...) asparagine; by host glycosylation is present at Asn-201. 277-278 (EE) is a substrate binding site. Arg-293 is a binding site for substrate. 3 residues coordinate Ca(2+): Asp-294, Gly-298, and Asp-325. Substrate is bound at residue Arg-372. An N-linked (GlcNAc...) asparagine; by host glycan is attached at Asn-402. Tyr-406 serves as the catalytic Nucleophile.

The protein belongs to the glycosyl hydrolase 34 family. In terms of assembly, homotetramer. The cofactor is Ca(2+). In terms of processing, N-glycosylated.

The protein resides in the virion membrane. Its subcellular location is the host apical cell membrane. The enzyme catalyses Hydrolysis of alpha-(2-&gt;3)-, alpha-(2-&gt;6)-, alpha-(2-&gt;8)- glycosidic linkages of terminal sialic acid residues in oligosaccharides, glycoproteins, glycolipids, colominic acid and synthetic substrates.. Inhibited by the neuraminidase inhibitors zanamivir (Relenza) and oseltamivir (Tamiflu). These drugs interfere with the release of progeny virus from infected cells and are effective against all influenza strains. Resistance to neuraminidase inhibitors is quite rare. Functionally, catalyzes the removal of terminal sialic acid residues from viral and cellular glycoconjugates. Cleaves off the terminal sialic acids on the glycosylated HA during virus budding to facilitate virus release. Additionally helps virus spread through the circulation by further removing sialic acids from the cell surface. These cleavages prevent self-aggregation and ensure the efficient spread of the progeny virus from cell to cell. Otherwise, infection would be limited to one round of replication. Described as a receptor-destroying enzyme because it cleaves a terminal sialic acid from the cellular receptors. May facilitate viral invasion of the upper airways by cleaving the sialic acid moieties on the mucin of the airway epithelial cells. Likely to plays a role in the budding process through its association with lipid rafts during intracellular transport. May additionally display a raft-association independent effect on budding. Plays a role in the determination of host range restriction on replication and virulence. Sialidase activity in late endosome/lysosome traffic seems to enhance virus replication. The chain is Neuraminidase from Influenza A virus (strain A/Gull/Astrakhan/227/1984 H13N6).